Reading from the N-terminus, the 363-residue chain is Small ribosomal subunit biogenesis GTPase RsgA (363 aa).

The 157-residue stretch at 112 to 268 (HQQVIAANID…LIDTPGMREL (157 aa)) folds into the CP-type G domain. Residues 157–160 (TKAD) and 210–218 (GSSGAGKST) each bind GTP. Zn(2+) contacts are provided by cysteine 291, cysteine 296, histidine 298, and cysteine 304. Residues 340-363 (RVAQNNRGKGSGKRPASIDRPGRR) form a disordered region.

Belongs to the TRAFAC class YlqF/YawG GTPase family. RsgA subfamily. In terms of assembly, monomer. Associates with 30S ribosomal subunit, binds 16S rRNA. It depends on Zn(2+) as a cofactor.

It is found in the cytoplasm. Its function is as follows. One of several proteins that assist in the late maturation steps of the functional core of the 30S ribosomal subunit. Helps release RbfA from mature subunits. May play a role in the assembly of ribosomal proteins into the subunit. Circularly permuted GTPase that catalyzes slow GTP hydrolysis, GTPase activity is stimulated by the 30S ribosomal subunit. This is Small ribosomal subunit biogenesis GTPase RsgA from Xanthomonas oryzae pv. oryzae (strain PXO99A).